The chain runs to 455 residues: MTTSSRTCPVPAVNGHMTHYPAAPYPLLFPPVIGGLSLPSLHGLQSHPPTSGCSTPSPASVETQSTSSEELVPSPPSPLPPPRVYKPCFVCQDKSSGYHYGVSACEGCKGFFRRSIQKNMVYTCHRDKNCVINKVTRNRCQYCRLQKCFEVGMSKESVRNDRNKKKKEPTKQESTENYEMTAELDDLTEKIRKAHQETFPSLCQLGKYTTNSSADHRVRLDLGLWDKFSELATKCIIKIVEFAKRLPGFTSLTIADQITLLKAACLDILILRICTRYTPEQDTMTFSDGLTLNRTQMHNAGFGPLTDLVFTFANQLLPLEMDDTETGLLSAICLICGDRQDLEEPMKVDKLQEPLLEALKIYIRKRRPNKPHMFPKILMKITDLRSISAKGAERVITLKMEIPGSMPPLIQEMLENSEGHEPLTPTSNGNTAEHSPSISPSSVDNSSVSQSPMVQ.

The tract at residues 1–87 (MTTSSRTCPV…PLPPPRVYKP (87 aa)) is modulating. Residues 45–78 (QSHPPTSGCSTPSPASVETQSTSSEELVPSPPSP) form a disordered region. A compositionally biased stretch (polar residues) spans 47-66 (HPPTSGCSTPSPASVETQST). 2 NR C4-type zinc fingers span residues 88–108 (CFVCQDKSSGYHYGVSACEGC) and 124–148 (CHRDKNCVINKVTRNRCQYCRLQKC). The segment at residues 88–153 (CFVCQDKSSG…RLQKCFEVGM (66 aa)) is a DNA-binding region (nuclear receptor). A hinge region spans residues 154 to 182 (SKESVRNDRNKKKKEPTKQESTENYEMTA). Residues 183 to 417 (ELDDLTEKIR…PLIQEMLENS (235 aa)) form the NR LBD domain. Positions 416-455 (NSEGHEPLTPTSNGNTAEHSPSISPSSVDNSSVSQSPMVQ) are disordered. Residues 424–434 (TPTSNGNTAEH) are compositionally biased toward polar residues. A compositionally biased stretch (low complexity) spans 435–455 (SPSISPSSVDNSSVSQSPMVQ).

The protein belongs to the nuclear hormone receptor family. NR1 subfamily. Heterodimer; with a RXR molecule. Binds DNA preferentially as a RAR/RXR heterodimer. Both isoforms expressed in heart, lung, kidney, liver, brain, lung and testis. Isoform Beta-1 is highly expressed in testes and brain. Levels increase during testes maturation. Isoform beta-2 is predominant in heart, kidney and lung.

Its subcellular location is the nucleus. Receptor for retinoic acid. Retinoic acid receptors bind as heterodimers to their target response elements in response to their ligands, all-trans or 9-cis retinoic acid, and regulate gene expression in various biological processes. The RAR/RXR heterodimers bind to the retinoic acid response elements (RARE) composed of tandem 5'-AGGTCA-3' sites known as DR1-DR5. May be required for Sertoli cell differentiation and spermatogenesis. The sequence is that of Retinoic acid receptor beta (RARB) from Coturnix japonica (Japanese quail).